We begin with the raw amino-acid sequence, 341 residues long: Phenylalanine--tRNA ligase alpha subunit (341 aa).

A Mg(2+)-binding site is contributed by E256.

This sequence belongs to the class-II aminoacyl-tRNA synthetase family. Phe-tRNA synthetase alpha subunit type 1 subfamily. As to quaternary structure, tetramer of two alpha and two beta subunits. Requires Mg(2+) as cofactor.

The protein resides in the cytoplasm. It catalyses the reaction tRNA(Phe) + L-phenylalanine + ATP = L-phenylalanyl-tRNA(Phe) + AMP + diphosphate + H(+). The chain is Phenylalanine--tRNA ligase alpha subunit from Leptospira interrogans serogroup Icterohaemorrhagiae serovar Lai (strain 56601).